The primary structure comprises 321 residues: Aspartate carbamoyltransferase catalytic subunit (321 aa).

Residues Arg-65 and Thr-66 each contribute to the carbamoyl phosphate site. Residue Lys-93 participates in L-aspartate binding. Carbamoyl phosphate-binding residues include Arg-115, His-143, and Gln-146. L-aspartate is bound by residues Arg-176 and Arg-230. Residues Gly-271 and Pro-272 each coordinate carbamoyl phosphate.

The protein belongs to the aspartate/ornithine carbamoyltransferase superfamily. ATCase family. As to quaternary structure, heterododecamer (2C3:3R2) of six catalytic PyrB chains organized as two trimers (C3), and six regulatory PyrI chains organized as three dimers (R2).

The catalysed reaction is carbamoyl phosphate + L-aspartate = N-carbamoyl-L-aspartate + phosphate + H(+). It participates in pyrimidine metabolism; UMP biosynthesis via de novo pathway; (S)-dihydroorotate from bicarbonate: step 2/3. Its function is as follows. Catalyzes the condensation of carbamoyl phosphate and aspartate to form carbamoyl aspartate and inorganic phosphate, the committed step in the de novo pyrimidine nucleotide biosynthesis pathway. This is Aspartate carbamoyltransferase catalytic subunit from Bartonella quintana (strain Toulouse) (Rochalimaea quintana).